The sequence spans 248 residues: 5'-nucleotidase SurE (248 aa).

Positions 8, 9, 39, and 91 each coordinate a divalent metal cation.

This sequence belongs to the SurE nucleotidase family. It depends on a divalent metal cation as a cofactor.

It is found in the cytoplasm. It catalyses the reaction a ribonucleoside 5'-phosphate + H2O = a ribonucleoside + phosphate. Its function is as follows. Nucleotidase that shows phosphatase activity on nucleoside 5'-monophosphates. The chain is 5'-nucleotidase SurE from Neisseria meningitidis serogroup C / serotype 2a (strain ATCC 700532 / DSM 15464 / FAM18).